The following is a 237-amino-acid chain: Protein-S-isoprenylcysteine O-methyltransferase (237 aa).

4 consecutive transmembrane segments (helical) span residues 26-46, 53-73, 92-112, and 116-136; these read SSAI…LFIF, FGIY…WVTM, FNMA…FFPS, and FSLW…RSVA. S-adenosyl-L-methionine-binding positions include Gln-149, 156-159, Tyr-164, and 169-172; these read HVLV and HPSY. A helical membrane pass occupies residues 184 to 204; the sequence is VILMNPISIIGFGWASWSFFS. Arg-206 is a substrate binding site. Glu-210 serves as a coordination point for S-adenosyl-L-methionine.

The protein belongs to the class VI-like SAM-binding methyltransferase superfamily. Isoprenylcysteine carboxyl methyltransferase family.

The protein resides in the endoplasmic reticulum membrane. It carries out the reaction [protein]-C-terminal S-[(2E,6E)-farnesyl]-L-cysteine + S-adenosyl-L-methionine = [protein]-C-terminal S-[(2E,6E)-farnesyl]-L-cysteine methyl ester + S-adenosyl-L-homocysteine. Its function is as follows. Methylates the C-terminal cysteine residues of small GTPases and the heterotrimeric G protein gamma subunit in response to cAMP. The methylation is required for intercellular signaling and regulation of cAMP waves propagation. It also seems to induce the activity of car1, a G protein-coupled receptor which senses extracellular cAMP during the aggregation phase of development. In Dictyostelium discoideum (Social amoeba), this protein is Protein-S-isoprenylcysteine O-methyltransferase (icmt-1).